A 234-amino-acid polypeptide reads, in one-letter code: 1-(5-phosphoribosyl)-5-[(5-phosphoribosylamino)methylideneamino] imidazole-4-carboxamide isomerase (234 aa).

Catalysis depends on aspartate 9, which acts as the Proton acceptor. Catalysis depends on aspartate 131, which acts as the Proton donor.

Belongs to the HisA/HisF family.

The protein resides in the cytoplasm. It carries out the reaction 1-(5-phospho-beta-D-ribosyl)-5-[(5-phospho-beta-D-ribosylamino)methylideneamino]imidazole-4-carboxamide = 5-[(5-phospho-1-deoxy-D-ribulos-1-ylimino)methylamino]-1-(5-phospho-beta-D-ribosyl)imidazole-4-carboxamide. It functions in the pathway amino-acid biosynthesis; L-histidine biosynthesis; L-histidine from 5-phospho-alpha-D-ribose 1-diphosphate: step 4/9. The polypeptide is 1-(5-phosphoribosyl)-5-[(5-phosphoribosylamino)methylideneamino] imidazole-4-carboxamide isomerase (Staphylococcus epidermidis (strain ATCC 35984 / DSM 28319 / BCRC 17069 / CCUG 31568 / BM 3577 / RP62A)).